The chain runs to 373 residues: Probable di-N-acetylchitobiase 1 (373 aa).

The N-terminal stretch at 1 to 20 is a signal peptide; it reads MKIFIIISLILTILIIQSKS. A GH18 domain is found at 21–369; it reads KECPCSNVEL…SGMWGALNSF (349 aa). N-linked (GlcNAc...) asparagine glycosylation occurs at N48. Residues 53-54 and 82-85 contribute to the chitin site; these read PY and NGVR. N-linked (GlcNAc...) asparagine glycosylation occurs at N99. E127 acts as the Proton donor in catalysis. Residues Y128 and 191–194 contribute to the chitin site; that span reads MDYD. 5 N-linked (GlcNAc...) asparagine glycosylation sites follow: N222, N250, N269, N279, and N288. Residue W347 coordinates chitin.

It belongs to the glycosyl hydrolase 18 family.

It is found in the lysosome. Involved in the degradation of asparagine-linked glycoproteins. May hydrolyze of N-acetyl-beta-D-glucosamine (1-4)N-acetylglucosamine chitobiose core from the reducing end of the bond. The polypeptide is Probable di-N-acetylchitobiase 1 (ctbs1) (Dictyostelium discoideum (Social amoeba)).